The following is a 64-amino-acid chain: uncharacterized protein (64 aa).

Residues 30–52 form a helical membrane-spanning segment; it reads FYAIFEMLFWPLVSLISVGLLGE.

The protein resides in the membrane. This is an uncharacterized protein from Archaeoglobus fulgidus (strain ATCC 49558 / DSM 4304 / JCM 9628 / NBRC 100126 / VC-16).